Here is a 442-residue protein sequence, read N- to C-terminus: UPF0597 protein HRM2_02820 (442 aa).

It belongs to the UPF0597 family.

This chain is UPF0597 protein HRM2_02820, found in Desulforapulum autotrophicum (strain ATCC 43914 / DSM 3382 / VKM B-1955 / HRM2) (Desulfobacterium autotrophicum).